Consider the following 224-residue polypeptide: Large ribosomal subunit protein uL11c (224 aa).

The N-terminal 66 residues, 1–66 (MAQPLVAAPS…SHRRLSIVAM (66 aa)), are a transit peptide targeting the chloroplast. N6,N6,N6-trimethyllysine occurs at positions 75 and 111.

Component of the chloroplast large ribosomal subunit (LSU). Mature 70S chloroplast ribosomes of higher plants consist of a small (30S) and a large (50S) subunit. The 30S small subunit contains 1 molecule of ribosomal RNA (16S rRNA) and 24 different proteins. The 50S large subunit contains 3 rRNA molecules (23S, 5S and 4.5S rRNA) and 33 different proteins.

The protein localises to the plastid. The protein resides in the chloroplast. Functionally, component of the chloroplast ribosome (chloro-ribosome), a dedicated translation machinery responsible for the synthesis of chloroplast genome-encoded proteins, including proteins of the transcription and translation machinery and components of the photosynthetic apparatus. The sequence is that of Large ribosomal subunit protein uL11c (rpl11) from Spinacia oleracea (Spinach).